A 785-amino-acid chain; its full sequence is Protein SEY1 (785 aa).

At 1–690 the chain is on the cytoplasmic side; the sequence is MTDLEVSAIQ…KRSVINSKTE (690 aa). In terms of domain architecture, GB1/RHD3-type G spans 40 to 266; the sequence is GLNYHIVSVF…SEDQLFNEGY (227 aa). A GTP-binding site is contributed by 50–57; the sequence is GSQSTGKS. The stretch at 451–479 forms a coiled coil; that stretch reads PKLRELEEELSNLRTELVNKEQENIKTKI. A helical transmembrane segment spans residues 691–711; sequence VPLYIYALLLVLGWNEFMIIL. Over 712–714 the chain is Lumenal; that stretch reads RNP. Residues 715 to 735 form a helical membrane-spanning segment; that stretch reads LLITLLLIGLTGLYLGYKTKL. Residues 736 to 785 lie on the Cytoplasmic side of the membrane; it reads LGPIVQVVQAMIQELQDQAKNKLRDVLVSEPEAPSQVRIGKEVDATKDED.

This sequence belongs to the TRAFAC class dynamin-like GTPase superfamily. GB1/RHD3 GTPase family. RHD3 subfamily.

The protein resides in the endoplasmic reticulum membrane. Functionally, cooperates with the reticulon proteins and tubule-shaping DP1 family proteins to generate and maintain the structure of the tubular endoplasmic reticulum network. Has GTPase activity, which is required for its function in ER organization. The polypeptide is Protein SEY1 (Komagataella phaffii (strain GS115 / ATCC 20864) (Yeast)).